Consider the following 159-residue polypeptide: SsrA-binding protein (159 aa).

Positions 133–159 (KKLHDKRETSKERDWNRQKNRLLKERG) are disordered. Residues 137-159 (DKRETSKERDWNRQKNRLLKERG) show a composition bias toward basic and acidic residues.

Belongs to the SmpB family.

Its subcellular location is the cytoplasm. In terms of biological role, required for rescue of stalled ribosomes mediated by trans-translation. Binds to transfer-messenger RNA (tmRNA), required for stable association of tmRNA with ribosomes. tmRNA and SmpB together mimic tRNA shape, replacing the anticodon stem-loop with SmpB. tmRNA is encoded by the ssrA gene; the 2 termini fold to resemble tRNA(Ala) and it encodes a 'tag peptide', a short internal open reading frame. During trans-translation Ala-aminoacylated tmRNA acts like a tRNA, entering the A-site of stalled ribosomes, displacing the stalled mRNA. The ribosome then switches to translate the ORF on the tmRNA; the nascent peptide is terminated with the 'tag peptide' encoded by the tmRNA and targeted for degradation. The ribosome is freed to recommence translation, which seems to be the essential function of trans-translation. The sequence is that of SsrA-binding protein from Sinorhizobium medicae (strain WSM419) (Ensifer medicae).